The chain runs to 126 residues: Methylglyoxal synthase (126 aa).

One can recognise an MGS-like domain in the interval 1-126; sequence MAGGKCIALI…AERLIKTLNH (126 aa). Residues His-12, Lys-16, 38 to 41, and 59 to 60 each bind substrate; these read TGTT and SG. The Proton donor/acceptor role is filled by Asp-65. His-92 contacts substrate.

This sequence belongs to the methylglyoxal synthase family.

The catalysed reaction is dihydroxyacetone phosphate = methylglyoxal + phosphate. Catalyzes the formation of methylglyoxal from dihydroxyacetone phosphate. The chain is Methylglyoxal synthase from Rhizobium rhizogenes (strain K84 / ATCC BAA-868) (Agrobacterium radiobacter).